The sequence spans 375 residues: Queuine tRNA-ribosyltransferase (375 aa).

The active-site Proton acceptor is the Asp94. Residues 94–98, Asp148, Gln191, and Gly218 each bind substrate; that span reads DSGGF. Residues 249 to 255 are RNA binding; the sequence is GVGSPDD. Asp268 functions as the Nucleophile in the catalytic mechanism. Residues 273–277 form an RNA binding; important for wobble base 34 recognition region; sequence TRIAR. Zn(2+) is bound by residues Cys306, Cys308, Cys311, and His337.

This sequence belongs to the queuine tRNA-ribosyltransferase family. Homodimer. Within each dimer, one monomer is responsible for RNA recognition and catalysis, while the other monomer binds to the replacement base PreQ1. Zn(2+) is required as a cofactor.

It catalyses the reaction 7-aminomethyl-7-carbaguanine + guanosine(34) in tRNA = 7-aminomethyl-7-carbaguanosine(34) in tRNA + guanine. It participates in tRNA modification; tRNA-queuosine biosynthesis. In terms of biological role, catalyzes the base-exchange of a guanine (G) residue with the queuine precursor 7-aminomethyl-7-deazaguanine (PreQ1) at position 34 (anticodon wobble position) in tRNAs with GU(N) anticodons (tRNA-Asp, -Asn, -His and -Tyr). Catalysis occurs through a double-displacement mechanism. The nucleophile active site attacks the C1' of nucleotide 34 to detach the guanine base from the RNA, forming a covalent enzyme-RNA intermediate. The proton acceptor active site deprotonates the incoming PreQ1, allowing a nucleophilic attack on the C1' of the ribose to form the product. After dissociation, two additional enzymatic reactions on the tRNA convert PreQ1 to queuine (Q), resulting in the hypermodified nucleoside queuosine (7-(((4,5-cis-dihydroxy-2-cyclopenten-1-yl)amino)methyl)-7-deazaguanosine). This Thermoanaerobacter pseudethanolicus (strain ATCC 33223 / 39E) (Clostridium thermohydrosulfuricum) protein is Queuine tRNA-ribosyltransferase.